The sequence spans 269 residues: Protein-L-isoaspartate O-methyltransferase (269 aa).

The segment at 1–53 is disordered; sequence MSAGQRPAPKFPLRLDQVKPAGRSGAAPLLRPQRPLHQAATERGRGTTPAGLG. The active site involves Ser113.

The protein belongs to the methyltransferase superfamily. L-isoaspartyl/D-aspartyl protein methyltransferase family.

It is found in the cytoplasm. The catalysed reaction is [protein]-L-isoaspartate + S-adenosyl-L-methionine = [protein]-L-isoaspartate alpha-methyl ester + S-adenosyl-L-homocysteine. Catalyzes the methyl esterification of L-isoaspartyl residues in peptides and proteins that result from spontaneous decomposition of normal L-aspartyl and L-asparaginyl residues. It plays a role in the repair and/or degradation of damaged proteins. The protein is Protein-L-isoaspartate O-methyltransferase of Methylibium petroleiphilum (strain ATCC BAA-1232 / LMG 22953 / PM1).